The chain runs to 369 residues: Terpene cyclase DEP1 (369 aa).

The next 8 helical transmembrane spans lie at 9–29 (FFYL…FNGM), 82–102 (LLFF…LIES), 118–138 (AMVL…LYLV), 157–177 (ALLV…VPAW), 190–210 (IALF…LASI), 234–254 (LVLA…GALI), 298–318 (LFSQ…SHLL), and 342–362 (LVYL…SFAL).

The protein belongs to the membrane-bound ascI terpene cyclase family.

Its subcellular location is the membrane. It functions in the pathway polyketide biosynthesis. Its function is as follows. Part of the gene cluster that mediates the biosynthesis of depudecin, a highly oxidized eleven-carbon linear polyketide that acts as a histone deacetylase (HDAC) inhibitor and makes a small contribution to pathogenesis. The reducing polyketide synthase DEP5 is the central enzyme in depudecin biosynthesis by yielding the backbone polyketide chain. The monooxygenases DEP2 and DEP4, as well as the uncharacterized protein DEP1, then act as tailoring enzymes to modify the intermediate polyketide chain into depudecin. In Alternaria brassicicola (Dark leaf spot agent), this protein is Terpene cyclase DEP1.